The following is a 98-amino-acid chain: NADH-ubiquinone oxidoreductase chain 4L (98 aa).

3 helical membrane passes run 2–22, 29–49, and 61–81; these read PSIS…MLMF, SLLC…LIIL, and ILLL…LVMV.

This sequence belongs to the complex I subunit 4L family. In terms of assembly, core subunit of respiratory chain NADH dehydrogenase (Complex I) which is composed of 45 different subunits.

It is found in the mitochondrion inner membrane. The enzyme catalyses a ubiquinone + NADH + 5 H(+)(in) = a ubiquinol + NAD(+) + 4 H(+)(out). Its function is as follows. Core subunit of the mitochondrial membrane respiratory chain NADH dehydrogenase (Complex I) which catalyzes electron transfer from NADH through the respiratory chain, using ubiquinone as an electron acceptor. Part of the enzyme membrane arm which is embedded in the lipid bilayer and involved in proton translocation. This Microcebus griseorufus (Gray-brown mouse lemur) protein is NADH-ubiquinone oxidoreductase chain 4L (MT-ND4L).